The following is a 501-amino-acid chain: LIM domain-containing protein HDR3 (501 aa).

Positions 33 to 67 (GEANRRRPRVTAGEETTLWEEPVRPKKEEPPRHNN) are disordered. Basic and acidic residues predominate over residues 53-67 (EPVRPKKEEPPRHNN). UIM domains lie at 65 to 84 (HNNE…DAKN) and 94 to 113 (ENDE…NPYQ). The region spanning 131 to 191 (RVCGGCKHEI…KLCYKELHHP (61 aa)) is the LIM zinc-binding domain. Residues 429-448 (YASSSSSSCRPPPSKKGGIS) are disordered.

Interacts (via N-terminus) with GW6A (via C-terminus).

Functionally, ubiquitin receptor that functions as a positive regulator of grain size and weight. Functions in the same genetic pathway as GW6A to regulate grain size. Modulates grain size in a similar manner to GW6A, by altering cell proliferation in spikelet hulls. Interacts with and enhances the ubiquitination of GW6A. This stabilizes GW6A, delays protein degradation by the 26S proteasome and enhances GW6A histone acetyltransferase activity. The protein is LIM domain-containing protein HDR3 of Oryza sativa subsp. japonica (Rice).